We begin with the raw amino-acid sequence, 140 residues long: Fluoride-specific ion channel FluC 1 (140 aa).

3 helical membrane passes run 45-65, 82-102, and 106-126; these read IPSL…IGFL, FLGA…TQTI, and LFYG…GVFI. Na(+) contacts are provided by Gly-89 and Thr-92.

It belongs to the fluoride channel Fluc/FEX (TC 1.A.43) family.

Its subcellular location is the cell membrane. The catalysed reaction is fluoride(in) = fluoride(out). Its activity is regulated as follows. Na(+) is not transported, but it plays an essential structural role and its presence is essential for fluoride channel function. Functionally, fluoride-specific ion channel. Important for reducing fluoride concentration in the cell, thus reducing its toxicity. In Methanospirillum hungatei JF-1 (strain ATCC 27890 / DSM 864 / NBRC 100397 / JF-1), this protein is Fluoride-specific ion channel FluC 1.